A 1326-amino-acid polypeptide reads, in one-letter code: Putative late blight resistance protein homolog R1B-19 (1326 aa).

2 coiled-coil regions span residues R421–Q444 and P536–N558. G570–T577 serves as a coordination point for ATP. Residues L611–V864 enclose the NB-ARC domain. A coiled-coil region spans residues S749–H770. LRR repeat units follow at residues F953–K978, F980–L996, L1027–L1050, L1053–P1070, I1071–P1094, Y1098–L1118, K1119–Q1146, F1167–I1191, and L1208–R1230. The HMA domain occupies I1209–T1278.

It belongs to the disease resistance NB-LRR family.

It is found in the cytoplasm. Its subcellular location is the membrane. Its function is as follows. Confers resistance to late blight (Phytophthora infestans) races carrying the avirulence gene Avr1. Resistance proteins guard the plant against pathogens that contain an appropriate avirulence protein via an indirect interaction with this avirulence protein. That triggers a defense system including the hypersensitive response, which restricts the pathogen growth. The protein is Putative late blight resistance protein homolog R1B-19 (R1B-19) of Solanum demissum (Wild potato).